The sequence spans 243 residues: Urease accessory protein UreF (243 aa).

It belongs to the UreF family. As to quaternary structure, ureD, UreF and UreG form a complex that acts as a GTP-hydrolysis-dependent molecular chaperone, activating the urease apoprotein by helping to assemble the nickel containing metallocenter of UreC. The UreE protein probably delivers the nickel.

The protein resides in the cytoplasm. Required for maturation of urease via the functional incorporation of the urease nickel metallocenter. The protein is Urease accessory protein UreF of Xanthobacter autotrophicus (strain ATCC BAA-1158 / Py2).